A 399-amino-acid polypeptide reads, in one-letter code: Vitamin K-dependent protein Z (399 aa).

The signal sequence occupies residues 1–22 (MAGCILLLRGFILTLILHQVEL). Residues 23 to 40 (SVFLPAPKANNVLRRWRR) constitute a propeptide that is removed on maturation. The 46-residue stretch at 41–86 (GSSYFLEEIFQGNLEKECYEEVCNYEEAREVFENDVITDEFWRQYG) folds into the Gla domain. 11 positions are modified to 4-carboxyglutamate: E47, E48, E55, E57, E60, E61, E66, E67, E70, E73, and E80. C58 and C63 are oxidised to a cystine. 2 EGF-like domains span residues 87–123 (GGSP…KTCA) and 125–166 (AKNE…KSCG). Disulfide bonds link C91–C102, C96–C111, C113–C122, C129–C141, C137–C150, C152–C165, and C208–C224. A glycan (N-linked (GlcNAc...) asparagine) is linked at N99. The residue at position 104 (D104) is a (3R)-3-hydroxyaspartate. Residues 172 to 399 (ACGALTSEHI…YSMWFKQIMK (228 aa)) enclose the Peptidase S1 domain. N230, N305, and N331 each carry an N-linked (GlcNAc...) asparagine glycan. An intrachain disulfide couples C326 to C340.

The protein belongs to the peptidase S1 family. Post-translationally, the iron and 2-oxoglutarate dependent 3-hydroxylation of aspartate and asparagine is (R) stereospecific within EGF domains. In terms of tissue distribution, plasma.

Its subcellular location is the secreted. In terms of biological role, appears to assist hemostasis by binding thrombin and promoting its association with phospholipid vesicles. Inhibits activity of the coagulation protease factor Xa in the presence of SERPINA10, calcium and phospholipids. This chain is Vitamin K-dependent protein Z (Proz), found in Mus musculus (Mouse).